Reading from the N-terminus, the 85-residue chain is ATP synthase subunit c (85 aa).

The next 2 helical transmembrane spans lie at 10 to 30 (IAVA…FGLL) and 53 to 73 (FIVA…ALFF).

The protein belongs to the ATPase C chain family. F-type ATPases have 2 components, F(1) - the catalytic core - and F(0) - the membrane proton channel. F(1) has five subunits: alpha(3), beta(3), gamma(1), delta(1), epsilon(1). F(0) has three main subunits: a(1), b(2) and c(10-14). The alpha and beta chains form an alternating ring which encloses part of the gamma chain. F(1) is attached to F(0) by a central stalk formed by the gamma and epsilon chains, while a peripheral stalk is formed by the delta and b chains.

The protein resides in the cell inner membrane. F(1)F(0) ATP synthase produces ATP from ADP in the presence of a proton or sodium gradient. F-type ATPases consist of two structural domains, F(1) containing the extramembraneous catalytic core and F(0) containing the membrane proton channel, linked together by a central stalk and a peripheral stalk. During catalysis, ATP synthesis in the catalytic domain of F(1) is coupled via a rotary mechanism of the central stalk subunits to proton translocation. Its function is as follows. Key component of the F(0) channel; it plays a direct role in translocation across the membrane. A homomeric c-ring of between 10-14 subunits forms the central stalk rotor element with the F(1) delta and epsilon subunits. This is ATP synthase subunit c from Pseudomonas syringae pv. syringae (strain B728a).